The sequence spans 407 residues: Cathepsin D (407 aa).

Positions 1–20 are cleaved as a signal peptide; that stretch reads MQTPGVLLLILGLLDASSSA. The propeptide at 21–64 is activation peptide; the sequence is LIRIPLRKFTSIRRTMTEVGGSVEDLILKGPITKYSMQSSPRTK. The region spanning 79–402 is the Peptidase A1 domain; the sequence is YYGEIGIGTP…DREYNRVGFA (324 aa). Disulfide bonds link cysteine 91–cysteine 160 and cysteine 110–cysteine 117. Residue aspartate 97 is part of the active site. Asparagine 134 and asparagine 258 each carry an N-linked (GlcNAc...) asparagine glycan. An intrachain disulfide couples cysteine 281 to cysteine 285. Aspartate 290 is an active-site residue. Cysteine 324 and cysteine 361 are oxidised to a cystine.

This sequence belongs to the peptidase A1 family. In terms of assembly, occurs as a mixture of both a single chain form and two types of two chain (light and heavy) forms. Interacts with ADAM30; this leads to activation of CTSD. N- and O-glycosylated. In terms of processing, undergoes proteolytic cleavage and activation by ADAM30.

It localises to the lysosome. The protein localises to the melanosome. Its subcellular location is the secreted. The protein resides in the extracellular space. The enzyme catalyses Specificity similar to, but narrower than, that of pepsin A. Does not cleave the 4-Gln-|-His-5 bond in B chain of insulin.. In terms of biological role, acid protease active in intracellular protein breakdown. Plays a role in APP processing following cleavage and activation by ADAM30 which leads to APP degradation. In Rattus norvegicus (Rat), this protein is Cathepsin D (Ctsd).